A 377-amino-acid polypeptide reads, in one-letter code: Modification methylase CviBIII (377 aa).

Belongs to the N(4)/N(6)-methyltransferase family.

It catalyses the reaction a 2'-deoxyadenosine in DNA + S-adenosyl-L-methionine = an N(6)-methyl-2'-deoxyadenosine in DNA + S-adenosyl-L-homocysteine + H(+). Its function is as follows. A gamma subtype methylase that recognizes the double-stranded sequence 5'-TCGA-3' and methylates A-4 on both strands. The sequence is that of Modification methylase CviBIII (CVIBIIIM) from Paramecium bursaria Chlorella virus NC1A (PBCV-NC1A).